The following is a 966-amino-acid chain: DNA mismatch repair protein MutS (966 aa).

709–716 is a binding site for ATP; the sequence is GPNMAGKS. The disordered stretch occupies residues 894 to 914; sequence EGQRPPSSPAQPPAPPAPVVV. Pro residues predominate over residues 899–912; the sequence is PSSPAQPPAPPAPV.

Belongs to the DNA mismatch repair MutS family.

Its function is as follows. This protein is involved in the repair of mismatches in DNA. It is possible that it carries out the mismatch recognition step. This protein has a weak ATPase activity. In Chloroflexus aurantiacus (strain ATCC 29366 / DSM 635 / J-10-fl), this protein is DNA mismatch repair protein MutS.